Consider the following 559-residue polypeptide: MSAPIHENERIKARSNCLRGTLRESLADTLTGAISPEDTQISKFHGFYQQDHRDRRQARPEQYLEPYFGFMLRAPLPGGVCTPAQWLAIDGMGRELGGGSLRLTTRQSFQYHGILKRDIASVIRGINAVMIDSIGGCGDVNRNVLCNPNPVESALHREVYDWAKRISEHLLPRTRAYHEIWLDGEQVGGGEDVEPIYGRTYLPRKFKTAVGVPPHNDVDVYANDLGFAAVADGSRLIGFNVSAGGTGRNTGIPATFPRLADVLGFVEPERTLAVAEAVVTTQRHFGDRLDRTQARLKYTIERMGLDAFRDEVERRAGIRFAPARPIGFTDQGDRTAWVRGQDGRWHLTLYIESGRLIDGPGQSSMQGLREIARIHQGDFRITPNQNLIVARVPEPGKSEIEALARKYGLLDKGIALRLNGMSCVALPTCPLAMAEAERYYPDFLAQVERLTRKHGLAEQEIVTRMTGCPNGCARPYLAELALVGKGPGRYNLMLGGNGRRYRLNRLYRENLDEAAILAEIDTLLGRYAACRQPGERFGDYLIRDGIVRPVVNPAEDFHE.

Positions 423, 429, 468, and 472 each coordinate [4Fe-4S] cluster. Position 472 (cysteine 472) interacts with siroheme.

This sequence belongs to the nitrite and sulfite reductase 4Fe-4S domain family. As to quaternary structure, alpha(8)-beta(8). The alpha component is a flavoprotein, the beta component is a hemoprotein. Siroheme serves as cofactor. [4Fe-4S] cluster is required as a cofactor.

The catalysed reaction is hydrogen sulfide + 3 NADP(+) + 3 H2O = sulfite + 3 NADPH + 4 H(+). It participates in sulfur metabolism; hydrogen sulfide biosynthesis; hydrogen sulfide from sulfite (NADPH route): step 1/1. Its function is as follows. Component of the sulfite reductase complex that catalyzes the 6-electron reduction of sulfite to sulfide. This is one of several activities required for the biosynthesis of L-cysteine from sulfate. This is Sulfite reductase [NADPH] hemoprotein beta-component from Thiocapsa roseopersicina.